Here is a 741-residue protein sequence, read N- to C-terminus: ABC transporter D family member 2 (741 aa).

3 helical membrane passes run 39–59 (GSLG…FSLV), 119–139 (FLSL…SVSI), and 260–280 (VVVM…VSGF). Positions 131-409 (ARTMLSVSIA…LMVALSQAIG (279 aa)) constitute an ABC transmembrane type-1 domain. Residues 518–740 (IKFENVSIVS…DDDHLKKPLS (223 aa)) form the ABC transporter domain. 551–558 (GPNGSGKS) lines the ATP pocket.

Belongs to the ABC transporter superfamily. ABCD family. Peroxisomal fatty acyl CoA transporter (TC 3.A.1.203) subfamily.

The protein resides in the membrane. This Dictyostelium discoideum (Social amoeba) protein is ABC transporter D family member 2 (abcD2).